Consider the following 330-residue polypeptide: o-succinylbenzoate synthase (330 aa).

Lysine 130 acts as the Proton donor in catalysis. Residues aspartate 155, glutamate 184, and aspartate 206 each coordinate Mg(2+). Residue lysine 228 is the Proton acceptor of the active site.

The protein belongs to the mandelate racemase/muconate lactonizing enzyme family. MenC type 1 subfamily. As to quaternary structure, monomer. The cofactor is a divalent metal cation.

The catalysed reaction is (1R,6R)-6-hydroxy-2-succinyl-cyclohexa-2,4-diene-1-carboxylate = 2-succinylbenzoate + H2O. The protein operates within quinol/quinone metabolism; 1,4-dihydroxy-2-naphthoate biosynthesis; 1,4-dihydroxy-2-naphthoate from chorismate: step 4/7. It functions in the pathway cofactor biosynthesis; phylloquinone biosynthesis. Functionally, converts 2-succinyl-6-hydroxy-2,4-cyclohexadiene-1-carboxylate (SHCHC) to 2-succinylbenzoate (OSB). Does not show N-succinylamino acid racemase (NSAR) activity with N-succinyl-L-phenylglycine as substrate. The polypeptide is o-succinylbenzoate synthase (Bdellovibrio bacteriovorus (strain ATCC 15356 / DSM 50701 / NCIMB 9529 / HD100)).